Reading from the N-terminus, the 185-residue chain is Protein GrpE (185 aa).

The tract at residues 1–44 (MSEEELTNGPGPEPQPEPLEVESAPLEAAPAGEPDKALLEAQQQ) is disordered.

This sequence belongs to the GrpE family. In terms of assembly, homodimer.

The protein resides in the cytoplasm. In terms of biological role, participates actively in the response to hyperosmotic and heat shock by preventing the aggregation of stress-denatured proteins, in association with DnaK and GrpE. It is the nucleotide exchange factor for DnaK and may function as a thermosensor. Unfolded proteins bind initially to DnaJ; upon interaction with the DnaJ-bound protein, DnaK hydrolyzes its bound ATP, resulting in the formation of a stable complex. GrpE releases ADP from DnaK; ATP binding to DnaK triggers the release of the substrate protein, thus completing the reaction cycle. Several rounds of ATP-dependent interactions between DnaJ, DnaK and GrpE are required for fully efficient folding. The polypeptide is Protein GrpE (Methylococcus capsulatus (strain ATCC 33009 / NCIMB 11132 / Bath)).